An 827-amino-acid chain; its full sequence is Zinc phosphodiesterase ELAC protein 2 (827 aa).

The N-terminal 16 residues, 1 to 16 (MWALRSLLRPLGLRTM), are a transit peptide targeting the mitochondrion. 2 disordered regions span residues 15 to 46 (TMSQGSARRPRPPKDPLRHLRTREKRGPGWGP) and 181 to 220 (SERRCGEQEPSRSPKRSPNRLSPKQSSSDPGSAENGQCLP). Residues 181-192 (SERRCGEQEPSR) show a composition bias toward basic and acidic residues. A phosphoserine mark is found at Ser193, Ser197, Ser202, Ser207, Ser617, and Ser735. Polar residues predominate over residues 199-210 (NRLSPKQSSSDP). Positions 794–827 (LTQQADSSEDREPHQKRAHSEEPHSPQSKKVRAQ) are disordered. The residue at position 795 (Thr795) is a Phosphothreonine. Position 800 is a phosphoserine (Ser800). Positions 801-817 (SEDREPHQKRAHSEEPH) are enriched in basic and acidic residues. A Phosphoserine modification is found at Ser818.

It belongs to the RNase Z family. In terms of assembly, homodimer. Interacts with PTCD1. Requires Zn(2+) as cofactor.

The protein resides in the mitochondrion. Its subcellular location is the mitochondrion matrix. It is found in the mitochondrion nucleoid. The protein localises to the nucleus. It catalyses the reaction Endonucleolytic cleavage of RNA, removing extra 3' nucleotides from tRNA precursor, generating 3' termini of tRNAs. A 3'-hydroxy group is left at the tRNA terminus and a 5'-phosphoryl group is left at the trailer molecule.. Zinc phosphodiesterase, which displays mitochondrial tRNA 3'-processing endonuclease activity. Involved in tRNA maturation, by removing a 3'-trailer from precursor tRNA. Associates with mitochondrial DNA complexes at the nucleoids to initiate RNA processing and ribosome assembly. The polypeptide is Zinc phosphodiesterase ELAC protein 2 (Elac2) (Rattus norvegicus (Rat)).